The sequence spans 1580 residues: Transcriptional activator GLI3 (1580 aa).

Residue M1 is modified to N-acetylmethionine. Polar residues-rich tracts occupy residues 1–10 and 58–78; these read MEAQSHSSTT and ITMQPQNVQGLSKVSEEPSTS. Positions 1–79 are disordered; it reads MEAQSHSSTT…KVSEEPSTSS (79 aa). Omega-N-methylarginine is present on R175. Residues 368–475 are disordered; it reads QSLGSAFGHS…DKDESKQEPE (108 aa). The segment covering 401–427 has biased composition (polar residues); sequence NPVQVSSGPSESSQNKPTSESAVSSTG. Residues K438 and K462 each participate in a glycyl lysine isopeptide (Lys-Gly) (interchain with G-Cter in SUMO2) cross-link. Over residues 461–474 the composition is skewed to basic and acidic residues; the sequence is VKEEGDKDESKQEP. C2H2-type zinc fingers lie at residues 480-505, 513-540, 546-570, 576-601, and 607-632; these read TNCHWEGCAREFDTQEQLVHHINNDH, FVCRWLDCSREQKPFKAQYMLVVHMRRH, HKCTFEGCTKAYSRLENLKTHLRSH, YVCEHEGCNKAFSNASDRAKHQNRTH, and YVCKIPGCTKRYTDPSSLRKHVKTVH. Residues 620 to 728 are disordered; it reads DPSSLRKHVK…PISNYSNSGL (109 aa). Over residues 632–648 the composition is skewed to basic and acidic residues; sequence HGPEAHVTKKQRGDIHP. Position 664 is a phosphoserine (S664). The span at 684–699 shows a compositional bias: basic and acidic residues; sequence SKREECLQVKTVKAEK. Positions 703–726 are enriched in low complexity; that stretch reads SQPSPGGQSSCSSQQSPISNYSNS. The mediates interaction with DZIP1 stretch occupies residues 745-845; that stretch reads DETPIMDSTI…VDVTMLNMLN (101 aa). K773 is covalently cross-linked (Glycyl lysine isopeptide (Lys-Gly) (interchain with G-Cter in ubiquitin)). K779 participates in a covalent cross-link: Glycyl lysine isopeptide (Lys-Gly) (interchain with G-Cter in SUMO2); alternate. A Glycyl lysine isopeptide (Lys-Gly) (interchain with G-Cter in ubiquitin); alternate cross-link involves residue K779. Glycyl lysine isopeptide (Lys-Gly) (interchain with G-Cter in ubiquitin) cross-links involve residues K784 and K800. 4 positions are modified to phosphoserine; by PKA: S849, S865, S877, and S907. Over residues 863–882 the composition is skewed to low complexity; that stretch reads RSSGISPCFSSRRSSEASQA. The disordered stretch occupies residues 863–918; that stretch reads RSSGISPCFSSRRSSEASQAEGRPQNVSVADSYDPISTDASRRSSEASQSDGLPSL. Residues 908 to 918 show a composition bias toward polar residues; sequence EASQSDGLPSL. Phosphoserine; by PKA occurs at positions 980 and 1006. Residues 981 to 1042 are disordered; that stretch reads DGGAHGYGRR…PAMATSAEKR (62 aa).

It belongs to the GLI C2H2-type zinc-finger protein family. In terms of assembly, the full-length GLI3 form (GLI3FL) interacts with SUFU and this interaction regulates the formation of either repressor or activator forms of GLI3. Its association with SUFU is regulated by Hh signaling and dissociation of the SUFU-GLI3 interaction requires the presence of the ciliary motor KIF3A. Interacts with KIF7. The activator form of GLI3 (GLI3A) but not the repressor form (GLI3R) can interact with TRPS1. The phosphorylated form interacts with BTRC. Interacts with ZIC1. Interacts with ZIC3 (via C2H2-type domains 3, 4 and 5); the interaction enhances its transcriptional activity. Interacts with WRD11; the interaction associates EMX1 with GLI3. Interacts with DZIP1; retains GLI3 within the cytoplasm. Post-translationally, phosphorylated on multiple sites by protein kinase A (PKA) and phosphorylation by PKA primes further phosphorylation by CK1 and GSK3. Phosphorylated by DYRK2 (in vitro). Phosphorylation is essential for its proteolytic processing. In terms of processing, transcriptional repressor GLI3R, a C-terminally truncated form, is generated from the full-length GLI3 protein (GLI3FL/GLI3-190) through proteolytic processing. This process requires PKA-primed phosphorylation of GLI3, ubiquitination of GLI3 and the presence of BTRC. GLI3FL is complexed with SUFU in the cytoplasm and is maintained in a neutral state. Without the Hh signal, the SUFU-GLI3 complex is recruited to cilia, leading to the efficient processing of GLI3FL into GLI3R. GLI3R formation leads to its dissociation from SUFU, allowing it to translocate into the nucleus, and repress Hh target genes. When Hh signaling is initiated, SUFU dissociates from GLI3FL and this has two consequences. First, GLI3R production is halted. Second, free GLI3FL translocates to the nucleus, where it is phosphorylated, destabilized, and converted to a transcriptional activator (GLI3A). Phosphorylated in vitro by ULK3. In terms of tissue distribution, is expressed in a wide variety of normal adult tissues, including lung, colon, spleen, placenta, testis, and myometrium.

Its subcellular location is the nucleus. It localises to the cytoplasm. The protein resides in the cell projection. It is found in the cilium. Functionally, has a dual function as a transcriptional activator and a repressor of the sonic hedgehog (Shh) pathway, and plays a role in limb development. The full-length GLI3 form (GLI3FL) after phosphorylation and nuclear translocation, acts as an activator (GLI3A) while GLI3R, its C-terminally truncated form, acts as a repressor. A proper balance between the GLI3 activator and the repressor GLI3R, rather than the repressor gradient itself or the activator/repressor ratio gradient, specifies limb digit number and identity. In concert with TRPS1, plays a role in regulating the size of the zone of distal chondrocytes, in restricting the zone of PTHLH expression in distal cells and in activating chondrocyte proliferation. Binds to the minimal GLI-consensus sequence 5'-GGGTGGTC-3'. The sequence is that of Transcriptional activator GLI3 (GLI3) from Homo sapiens (Human).